The chain runs to 434 residues: Serine hydroxymethyltransferase (434 aa).

(6S)-5,6,7,8-tetrahydrofolate is bound by residues Leu133 and 137–139 (GHL). Residue Lys242 is modified to N6-(pyridoxal phosphate)lysine.

The protein belongs to the SHMT family. As to quaternary structure, homodimer. Requires pyridoxal 5'-phosphate as cofactor.

The protein localises to the cytoplasm. The enzyme catalyses (6R)-5,10-methylene-5,6,7,8-tetrahydrofolate + glycine + H2O = (6S)-5,6,7,8-tetrahydrofolate + L-serine. The protein operates within one-carbon metabolism; tetrahydrofolate interconversion. It participates in amino-acid biosynthesis; glycine biosynthesis; glycine from L-serine: step 1/1. Catalyzes the reversible interconversion of serine and glycine with tetrahydrofolate (THF) serving as the one-carbon carrier. This reaction serves as the major source of one-carbon groups required for the biosynthesis of purines, thymidylate, methionine, and other important biomolecules. Also exhibits THF-independent aldolase activity toward beta-hydroxyamino acids, producing glycine and aldehydes, via a retro-aldol mechanism. This Methylobacterium radiotolerans (strain ATCC 27329 / DSM 1819 / JCM 2831 / NBRC 15690 / NCIMB 10815 / 0-1) protein is Serine hydroxymethyltransferase.